The chain runs to 244 residues: Probable transcriptional regulatory protein XfasM23_0940 (244 aa).

The protein belongs to the TACO1 family.

Its subcellular location is the cytoplasm. This is Probable transcriptional regulatory protein XfasM23_0940 from Xylella fastidiosa (strain M23).